We begin with the raw amino-acid sequence, 254 residues long: Bowman-Birk type bran trypsin inhibitor (254 aa).

Residues Met-1 to Ala-22 form the signal peptide. Positions His-23–Ser-118 are excised as a propeptide. 3 consecutive repeats follow at residues Lys-46–Glu-120, Arg-121–Pro-187, and Arg-188–Arg-251. 10 disulfides stabilise this stretch: Cys-51/Cys-248, Cys-125/Cys-185, Cys-126/Cys-143, Cys-152/Cys-159, Cys-156/Cys-172, Cys-193/Cys-248, Cys-194/Cys-209, Cys-199/Cys-207, Cys-216/Cys-223, and Cys-220/Cys-236. The propeptide occupies Ala-252–Asn-254.

The protein belongs to the Bowman-Birk serine protease inhibitor family. Expressed in roots, leaves and flowers.

The sequence is that of Bowman-Birk type bran trypsin inhibitor (RBBI3.3) from Oryza sativa subsp. indica (Rice).